A 156-amino-acid polypeptide reads, in one-letter code: Small ribosomal subunit protein uS7 (156 aa).

Belongs to the universal ribosomal protein uS7 family. Part of the 30S ribosomal subunit. Contacts proteins S9 and S11.

One of the primary rRNA binding proteins, it binds directly to 16S rRNA where it nucleates assembly of the head domain of the 30S subunit. Is located at the subunit interface close to the decoding center, probably blocks exit of the E-site tRNA. This chain is Small ribosomal subunit protein uS7, found in Lacticaseibacillus casei (strain BL23) (Lactobacillus casei).